The primary structure comprises 481 residues: 3-isopropylmalate dehydratase large subunit (481 aa).

Residues Cys357, Cys417, and Cys420 each contribute to the [4Fe-4S] cluster site.

It belongs to the aconitase/IPM isomerase family. LeuC type 1 subfamily. As to quaternary structure, heterodimer of LeuC and LeuD. Requires [4Fe-4S] cluster as cofactor.

It carries out the reaction (2R,3S)-3-isopropylmalate = (2S)-2-isopropylmalate. Its pathway is amino-acid biosynthesis; L-leucine biosynthesis; L-leucine from 3-methyl-2-oxobutanoate: step 2/4. Catalyzes the isomerization between 2-isopropylmalate and 3-isopropylmalate, via the formation of 2-isopropylmaleate. This chain is 3-isopropylmalate dehydratase large subunit, found in Maricaulis maris (strain MCS10) (Caulobacter maris).